We begin with the raw amino-acid sequence, 112 residues long: Urease subunit gamma (112 aa).

It belongs to the urease gamma subunit family. Heterotrimer of UreA (gamma), UreB (beta) and UreC (alpha) subunits. Three heterotrimers associate to form the active enzyme.

The protein resides in the cytoplasm. The catalysed reaction is urea + 2 H2O + H(+) = hydrogencarbonate + 2 NH4(+). The protein operates within nitrogen metabolism; urea degradation; CO(2) and NH(3) from urea (urease route): step 1/1. The polypeptide is Urease subunit gamma (Gloeothece citriformis (strain PCC 7424) (Cyanothece sp. (strain PCC 7424))).